The chain runs to 277 residues: Large ribosomal subunit protein uL2 (277 aa).

Positions 223–264 (VAMNPVDHPHGGGEGKTAAGRHPVSPWGTPSKGSRTRRNKRT) are disordered.

The protein belongs to the universal ribosomal protein uL2 family. As to quaternary structure, part of the 50S ribosomal subunit. Forms a bridge to the 30S subunit in the 70S ribosome.

In terms of biological role, one of the primary rRNA binding proteins. Required for association of the 30S and 50S subunits to form the 70S ribosome, for tRNA binding and peptide bond formation. It has been suggested to have peptidyltransferase activity; this is somewhat controversial. Makes several contacts with the 16S rRNA in the 70S ribosome. This chain is Large ribosomal subunit protein uL2, found in Nitrosomonas eutropha (strain DSM 101675 / C91 / Nm57).